The primary structure comprises 442 residues: Tryptophan synthase beta chain 2 (442 aa).

Lys122 is subject to N6-(pyridoxal phosphate)lysine.

This sequence belongs to the TrpB family. As to quaternary structure, tetramer of two alpha and two beta chains. It depends on pyridoxal 5'-phosphate as a cofactor.

It carries out the reaction (1S,2R)-1-C-(indol-3-yl)glycerol 3-phosphate + L-serine = D-glyceraldehyde 3-phosphate + L-tryptophan + H2O. Its pathway is amino-acid biosynthesis; L-tryptophan biosynthesis; L-tryptophan from chorismate: step 5/5. Its function is as follows. The beta subunit is responsible for the synthesis of L-tryptophan from indole and L-serine. The sequence is that of Tryptophan synthase beta chain 2 (trpB2) from Methanosarcina acetivorans (strain ATCC 35395 / DSM 2834 / JCM 12185 / C2A).